The chain runs to 456 residues: Smoothelin-like protein 2 (456 aa).

Positions 24–88 (LEGAVRALHE…RQVEALGLAT (65 aa)) form a coiled coil. Threonine 96 bears the Phosphothreonine mark. Serine 98, serine 126, and serine 131 each carry phosphoserine. Positions 120–129 (HATFSLSGRS) are enriched in polar residues. 3 disordered regions span residues 120 to 140 (HATF…ASDL), 154 to 190 (GHQL…RMPH), and 220 to 310 (VGGF…GAQA). Residues 131–140 (SVEHDEASDL) are compositionally biased toward basic and acidic residues. Residues 163–174 (NGSSEVQTSSAQ) show a composition bias toward polar residues. Over residues 242-251 (SSSFTRSLSG) the composition is skewed to low complexity. Phosphoserine occurs at positions 250, 252, and 265. A compositionally biased stretch (pro residues) spans 268 to 279 (LVTPPQSPPSSQ). Threonine 270 carries the post-translational modification Phosphothreonine. Serine 274 carries the phosphoserine modification. Polar residues predominate over residues 298–308 (RSQTLPRTSGA). The residue at position 339 (serine 339) is a Phosphoserine. In terms of domain architecture, Calponin-homology (CH) spans 346–453 (SSIKQILLEW…YVQSLYNHLR (108 aa)).

The protein belongs to the smoothelin family.

This is Smoothelin-like protein 2 (Smtnl2) from Mus musculus (Mouse).